We begin with the raw amino-acid sequence, 739 residues long: Copalyl diphosphate synthase 1 (739 aa).

Residue K154 coordinates substrate. Residues D287 and D289 each coordinate Mg(2+). The DXDD motif motif lies at 287–290 (DADD). K373 contacts substrate.

It belongs to the terpene synthase family. Requires Mg(2+) as cofactor.

The catalysed reaction is (2E,6E,10E)-geranylgeranyl diphosphate = (+)-copalyl diphosphate. It functions in the pathway secondary metabolite biosynthesis; terpenoid biosynthesis. Functionally, monofunctional diterpene synthase converting geranylgeranyl diphosphate to copalyl diphosphate. The protein is Copalyl diphosphate synthase 1 (CPS1) of Selaginella moellendorffii (Spikemoss).